Here is a 448-residue protein sequence, read N- to C-terminus: Ribosomal protein uS12 methylthiotransferase RimO (448 aa).

An MTTase N-terminal domain is found at P16 to P126. [4Fe-4S] cluster is bound by residues C25, C61, C90, C157, C161, and C164. The 238-residue stretch at L143–R380 folds into the Radical SAM core domain. The TRAM domain maps to R383 to V448.

The protein belongs to the methylthiotransferase family. RimO subfamily. [4Fe-4S] cluster is required as a cofactor.

It is found in the cytoplasm. The catalysed reaction is L-aspartate(89)-[ribosomal protein uS12]-hydrogen + (sulfur carrier)-SH + AH2 + 2 S-adenosyl-L-methionine = 3-methylsulfanyl-L-aspartate(89)-[ribosomal protein uS12]-hydrogen + (sulfur carrier)-H + 5'-deoxyadenosine + L-methionine + A + S-adenosyl-L-homocysteine + 2 H(+). In terms of biological role, catalyzes the methylthiolation of an aspartic acid residue of ribosomal protein uS12. In Methylorubrum extorquens (strain PA1) (Methylobacterium extorquens), this protein is Ribosomal protein uS12 methylthiotransferase RimO.